Here is a 778-residue protein sequence, read N- to C-terminus: Protein PHOTOPERIODIC CONTROL OF HYPOCOTYL 1 (778 aa).

Disordered stretches follow at residues 74 to 95, 186 to 283, and 316 to 335; these read QKRE…VGSS, HNRG…NSAT, and KTSP…KEAS. Positions 198-212 are enriched in basic and acidic residues; the sequence is SSKDTQEDGPRKNES. Residues 230-247 are compositionally biased toward low complexity; it reads SGSISSSSTKGKGIKGYS. Residues 265 to 275 are compositionally biased toward basic and acidic residues; it reads PDRENSVDGHQ. A compositionally biased stretch (polar residues) spans 317-326; sequence TSPSDSSETK. Residues 470 to 505 form the F-box domain; that stretch reads WPLLPNDLLELIMGHLETSFEIFLFRSVCSSWRSVV.

Interacts with light-activated phyB. Binds directly to PIF1 and COP1. Ubiquitinated by COP1 in darkness; this leads to proteasomal degradation. As to expression, mainly expressed in cotyledons, hypocotyls, leaves and roots.

The protein localises to the nucleus. Functionally, together with PCHL, regulates growth and development adaptation to the ambient environment by controlling negatively phytochrome B (phyB) dark reversion, a temperature-dependent thermal relaxation process during which phyB reverts from the active to the inactive state. Contributes to red (R) light-triggered photomorphogenesis. Promotes various light responses such as seed germination, hypocotyl gravitropism and chlorophyll biosynthesis, via direct interaction with PIF1 and COP1. Prevents DNA-binding ability of PIF1 to negatively regulate the expressions of its target genes. Facilitates the physical interaction between phyB and PIF1 and the subsequent light-induced degradation of PIF1. This chain is Protein PHOTOPERIODIC CONTROL OF HYPOCOTYL 1, found in Arabidopsis thaliana (Mouse-ear cress).